Reading from the N-terminus, the 2473-residue chain is Neurogenic locus notch homolog protein 2 (2473 aa).

Residues 1–25 (MPALRPAALRALLWLWLCGAGPAHA) form the signal peptide. EGF-like domains lie at 26–63 (LQCRGGQEPCVNEGTCVTYHNGTGFCRCPEGFLGEYCQ), 64–102 (HRDPCEKNRCQNGGTCVPQGMLGKATCRCAPGFTGEDCQ), 105–143 (TSHPCFVSRPCQNGGTCHMLSRDTYECTCQVGFTGKQCQ), and 144–180 (WTDACLSHPCENGSTCTSVASQFSCKCPAGLTGQKCE). Residues 26-1679 (LQCRGGQEPC…SELESPRNAQ (1654 aa)) lie on the Extracellular side of the membrane. 83 disulfides stabilise this stretch: Cys-28–Cys-41, Cys-35–Cys-51, Cys-53–Cys-62, Cys-68–Cys-79, Cys-73–Cys-90, Cys-92–Cys-101, Cys-109–Cys-121, Cys-115–Cys-131, Cys-133–Cys-142, Cys-148–Cys-159, Cys-153–Cys-168, Cys-170–Cys-179, Cys-186–Cys-198, Cys-192–Cys-207, Cys-209–Cys-218, Cys-230–Cys-246, Cys-248–Cys-257, Cys-264–Cys-275, Cys-269–Cys-284, Cys-286–Cys-295, Cys-302–Cys-315, Cys-309–Cys-324, Cys-326–Cys-335, Cys-342–Cys-353, Cys-347–Cys-362, Cys-364–Cys-373, Cys-379–Cys-390, Cys-384–Cys-401, Cys-403–Cys-412, Cys-419–Cys-433, Cys-427–Cys-442, Cys-444–Cys-453, Cys-460–Cys-471, Cys-465–Cys-480, Cys-482–Cys-491, Cys-498–Cys-509, Cys-503–Cys-518, Cys-520–Cys-529, Cys-536–Cys-547, Cys-541–Cys-556, Cys-558–Cys-567, Cys-574–Cys-584, Cys-579–Cys-593, Cys-595–Cys-604, Cys-611–Cys-622, Cys-616–Cys-631, Cys-633–Cys-642, Cys-649–Cys-659, Cys-654–Cys-668, Cys-670–Cys-679, Cys-686–Cys-697, Cys-691–Cys-706, Cys-708–Cys-717, Cys-724–Cys-734, Cys-729–Cys-743, Cys-745–Cys-754, Cys-761–Cys-772, Cys-766–Cys-781, Cys-783–Cys-792, Cys-799–Cys-810, Cys-804–Cys-819, Cys-821–Cys-830, Cys-837–Cys-848, Cys-842–Cys-859, Cys-861–Cys-870, Cys-877–Cys-888, Cys-882–Cys-897, Cys-899–Cys-908, Cys-915–Cys-926, Cys-920–Cys-935, Cys-937–Cys-946, Cys-953–Cys-964, Cys-958–Cys-973, Cys-975–Cys-984, Cys-991–Cys-1002, Cys-996–Cys-1011, Cys-1013–Cys-1022, Cys-1029–Cys-1040, Cys-1034–Cys-1049, Cys-1051–Cys-1060, Cys-1067–Cys-1078, Cys-1072–Cys-1087, and Cys-1089–Cys-1098. Asn-46 carries an N-linked (GlcNAc...) asparagine glycan. Asn-155 is a glycosylation site (N-linked (GlcNAc...) asparagine). An EGF-like 5; calcium-binding domain is found at 182–219 (DINECDIPGRCQHGGTCLNLPGSYRCQCPQGFTGQHCD). In terms of domain architecture, EGF-like 6; incomplete spans 221-258 (PYVPCAPSPCVNGGTCRQTGDFTFECNCLPGFEGSTCE). The EGF-like 7; calcium-binding domain maps to 260 to 296 (NIDDCPNHKCQNGGVCVDGVNTYNCRCPPQWTGQFCT). One can recognise an EGF-like 8; calcium-binding domain in the interval 298–336 (DVDECLLQPNACQNGGTCTNRNGGYGCVCVNGWSGDDCS). One can recognise an EGF-like 9; calcium-binding domain in the interval 338–374 (NIDDCAYASCTPGSTCIDRVASFSCLCPEGKAGLLCH). Positions 375-413 (LDDACISNPCHKGALCDTNPLNGQYICTCPQGYKGADCT) constitute an EGF-like 10 domain. Residues 415–454 (DVDECAMANSNPCEHAGKCVNTDGAFHCECLKGYAGPRCE) form the EGF-like 11; calcium-binding domain. Residues 456–492 (DINECHSDPCQNDATCLDKIGGFTCLCMPGFKGVHCE) enclose the EGF-like 12; calcium-binding domain. Residues 494 to 530 (EVNECQSNPCVNNGQCVDKVNRFQCLCPPGFTGPVCQ) enclose the EGF-like 13; calcium-binding domain. Residues 532–568 (DIDDCSSTPCLNGAKCIDHPNGYECQCATGFTGILCD) form the EGF-like 14; calcium-binding domain. In terms of domain architecture, EGF-like 15; calcium-binding spans 570 to 605 (NIDNCDPDPCHHGQCQDGIDSYTCICNPGYMGAICS). The EGF-like 16; calcium-binding domain maps to 607 to 643 (QIDECYSSPCLNDGRCIDLVNGYQCNCQPGTSGLNCE). Ser-613 is a glycosylation site (O-linked (Glc...) serine; alternate). The O-linked (Xyl...) serine; alternate glycan is linked to Ser-613. An EGF-like 17; calcium-binding domain is found at 645–680 (NFDDCASNPCMHGVCVDGINRYSCVCSPGFTGQRCN). Residues 682–718 (DIDECASNPCRKGATCINDVNGFRCICPEGPHHPSCY) enclose the EGF-like 18; calcium-binding domain. One can recognise an EGF-like 19 domain in the interval 720 to 755 (QVNECLSNPCIHGNCTGGLSGYKCLCDAGWVGVNCE). Asn-733 carries N-linked (GlcNAc...) asparagine glycosylation. One can recognise an EGF-like 20; calcium-binding domain in the interval 757 to 793 (DKNECLSNPCQNGGTCNNLVNGYRCTCKKGFKGYNCQ). Residues 795-831 (NIDECASNPCLNQGTCFDDVSGYTCHCMLPYTGKNCQ) form the EGF-like 21; calcium-binding domain. Residues 833–871 (VLAPCSPNPCENAAVCKEAPNFESFSCLCAPGWQGKRCT) form the EGF-like 22 domain. Residues 873-909 (DVDECISKPCMNNGVCHNTQGSYVCECPPGFSGMDCE) form the EGF-like 23; calcium-binding domain. The 37-residue stretch at 911 to 947 (DINDCLANPCQNGGSCVDHVNTFSCQCHPGFIGDKCQ) folds into the EGF-like 24; calcium-binding domain. Residues 949–985 (DMNECLSEPCKNGGTCSDYVNSYTCTCPAGFHGVHCE) form the EGF-like 25; calcium-binding domain. An EGF-like 26; calcium-binding domain is found at 987 to 1023 (NIDECTESSCFNGGTCVDGINSFSCLCPVGFTGPFCL). The region spanning 1025–1061 (DINECSSNPCLNAGTCVDGLGTYRCICPLGYTGKNCQ) is the EGF-like 27; calcium-binding domain. EGF-like domains are found at residues 1063–1099 (LVNLCSRSPCKNKGTCVQEKARPHCLCPPGWDGAYCD) and 1101–1147 (LNVS…SYCE). N-linked (GlcNAc...) asparagine glycosylation occurs at Asn-1102. 24 disulfide bridges follow: Cys-1105/Cys-1126, Cys-1120/Cys-1135, Cys-1137/Cys-1146, Cys-1153/Cys-1164, Cys-1158/Cys-1173, Cys-1175/Cys-1184, Cys-1191/Cys-1202, Cys-1196/Cys-1211, Cys-1213/Cys-1222, Cys-1229/Cys-1241, Cys-1235/Cys-1250, Cys-1252/Cys-1261, Cys-1268/Cys-1281, Cys-1273/Cys-1290, Cys-1292/Cys-1301, Cys-1308/Cys-1319, Cys-1313/Cys-1331, Cys-1333/Cys-1346, Cys-1378/Cys-1389, Cys-1383/Cys-1400, Cys-1402/Cys-1411, Cys-1425/Cys-1448, Cys-1430/Cys-1443, and Cys-1439/Cys-1455. In terms of domain architecture, EGF-like 30; calcium-binding spans 1149 to 1185 (QLDECASNPCQHGATCNDFIGGYRCECVPGYQGVNCE). The region spanning 1187–1223 (EVDECQNQPCQNGGTCIDLVNHFKCSCPPGTRGLLCE) is the EGF-like 31; calcium-binding domain. The EGF-like 32; calcium-binding domain occupies 1225–1262 (NIDECAGGPHCLNGGQCVDRIGGYTCRCLPGFAGERCE). EGF-like domains follow at residues 1264-1302 (DINECLSNPCSSEGSLDCVQLKNNYNCICRSAFTGRHCE), 1304-1343 (FLDVCPQKPCLNGGTCAVASNMPDGFICRCPPGFSGARCQ), and 1375-1412 (ESGCASNPCQHGGTCYPQRQPPHYSCRCPPSFGGSHCE). 3 LNR repeats span residues 1425–1465 (CQSQ…PWAN), 1466–1502 (CTSTLRCWEYINNQCDEQCNTAECLFDNFECQRNSKT), and 1503–1544 (CKYD…NLAE). The interval 1425–1679 (CQSQYCADKA…SELESPRNAQ (255 aa)) is negative regulatory region (NRR). A glycan (N-linked (GlcNAc...) asparagine) is linked at Asn-1465. Cystine bridges form between Cys-1466-Cys-1489, Cys-1472-Cys-1484, Cys-1480-Cys-1496, Cys-1503-Cys-1527, Cys-1509-Cys-1522, Cys-1518-Cys-1534, and Cys-1634-Cys-1641. The helical transmembrane segment at 1680-1700 (LLYLLAVAVVIILFFILLGVI) threads the bilayer. At 1701-2473 (MAKRKRKHGF…PPHSNMQVYA (773 aa)) the chain is on the cytoplasmic side. Thr-1718 carries the phosphothreonine modification. Residues 1755–1778 (GTSEHWVDDEGPQPKKAKAEDEAL) form a disordered region. Residue Ser-1780 is modified to Phosphoserine. The residue at position 1803 (Thr-1803) is a Phosphothreonine. Ser-1805 carries the phosphoserine modification. Thr-1809 is modified (phosphothreonine). ANK repeat units lie at residues 1828–1872 (DGCT…SLQA), 1877–1906 (TGEMALHLAARYSRADAAKRLLDAGADANA), 1910–1940 (MGRCPLHAAVAADAQGVFQILIRNRVTDLDA), 1944–1973 (DGTTPLILAARLAVEGMVAELINCQADVNA), 1977–2006 (HGKSALHWAAAVNNVEATLLLLKNGANRDM), and 2010–2039 (KEETPLFLAAREGSYEAAKILLDHFANRDI). 2 positions are modified to phosphoserine: Ser-1843 and Ser-1846. A phosphoserine mark is found at Ser-2071, Ser-2079, and Ser-2082. Phosphothreonine is present on Thr-2098. Disordered regions lie at residues 2098–2117 (TPMGKKARRPNTKSTMPTSL), 2122–2169 (KEAK…TSSP), and 2382–2473 (VGKY…QVYA). Over residues 2099 to 2108 (PMGKKARRPN) the composition is skewed to basic residues. Composition is skewed to polar residues over residues 2140-2151 (VQLSESSVTLSP) and 2390-2400 (SQHSYASSNAA). A compositionally biased stretch (low complexity) spans 2419–2446 (PSPESPDQWSSSSPHSASDWSDVTTSPT). The segment covering 2447-2456 (PGGGGGGQRG) has biased composition (gly residues).

The protein belongs to the NOTCH family. Heterodimer of a C-terminal fragment N(TM) and an N-terminal fragment N(EC) which are probably linked by disulfide bonds. Interacts with MAML1, MAML2 and MAML3 which act as transcriptional coactivators for NOTCH2. Interacts with RELA/p65. Interacts with HIF1AN. Interacts (via ANK repeats) with TCIM, the interaction inhibits the nuclear translocation of NOTCH2 N2ICD. Interacts with CUL1, RBX1, SKP1 and FBXW7 that are SCF(FBXW7) E3 ubiquitin-protein ligase complex components. Interacts with MINAR1; this interaction increases MINAR1 stability and function. Interacts with MDK; this interaction mediates a nuclear accumulation of NOTCH2 and therefore activation of NOTCH2 signaling leading to interaction between HES1 and STAT3. Interacts with MINAR2. In terms of processing, synthesized in the endoplasmic reticulum as an inactive form which is proteolytically cleaved by a furin-like convertase in the trans-Golgi network before it reaches the plasma membrane to yield an active, ligand-accessible form. Cleavage results in a C-terminal fragment N(TM) and a N-terminal fragment N(EC). Following ligand binding, it is cleaved by TNF-alpha converting enzyme (TACE) to yield a membrane-associated intermediate fragment called notch extracellular truncation (NEXT). This fragment is then cleaved by presenilin dependent gamma-secretase to release a notch-derived peptide containing the intracellular domain (NICD) from the membrane. Post-translationally, hydroxylated by HIF1AN. Can be either O-glucosylated or O-xylosylated at Ser-613 by POGLUT1. In terms of processing, phosphorylated by GSK3. GSK3-mediated phosphorylation is necessary for NOTCH2 recognition by FBXW7, ubiquitination and degradation via the ubiquitin proteasome pathway. As to expression, expressed in the brain, liver, kidney, neuroepithelia, somites, optic vesicles and branchial arches, but not heart.

The protein localises to the cell membrane. Its subcellular location is the nucleus. The protein resides in the cytoplasm. Functionally, functions as a receptor for membrane-bound ligands Jagged-1 (JAG1), Jagged-2 (JAG2) and Delta-1 (DLL1) to regulate cell-fate determination. Upon ligand activation through the released notch intracellular domain (NICD) it forms a transcriptional activator complex with RBPJ/RBPSUH and activates genes of the enhancer of split locus. Affects the implementation of differentiation, proliferation and apoptotic programs. May play an essential role in postimplantation development, probably in some aspect of cell specification and/or differentiation. In collaboration with RELA/p65 enhances NFATc1 promoter activity and positively regulates RANKL-induced osteoclast differentiation. Positively regulates self-renewal of liver cancer cells. The chain is Neurogenic locus notch homolog protein 2 from Mus musculus (Mouse).